Reading from the N-terminus, the 185-residue chain is TATA-box-binding protein (185 aa).

2 tandem repeats follow at residues 8–84 (IENI…VEML) and 99–175 (IQNM…LHEL).

This sequence belongs to the TBP family.

General factor that plays a role in the activation of archaeal genes transcribed by RNA polymerase. Binds specifically to the TATA box promoter element which lies close to the position of transcription initiation. This chain is TATA-box-binding protein, found in Thermococcus sibiricus (strain DSM 12597 / MM 739).